The primary structure comprises 358 residues: uncharacterized protein (358 aa).

C39, H61, C92, C95, C98, C106, and D157 together coordinate Zn(2+).

This sequence belongs to the zinc-containing alcohol dehydrogenase family. Requires Zn(2+) as cofactor.

This is an uncharacterized protein from Escherichia coli (strain K12).